The following is a 548-amino-acid chain: Membrane protein insertase YidC (548 aa).

Residues 6-26 (NLLVIALLFVSFMIWQAWEQD) traverse the membrane as a helical segment. Positions 28–56 (NPQPQTQQTTQTTTTAAGSAADQGVPASG) are disordered. Residues 29–42 (PQPQTQQTTQTTTT) show a composition bias toward low complexity. Transmembrane regions (helical) follow at residues 350–370 (FVGN…GIMY), 424–444 (FPLI…MGSI), 458–478 (LSAQ…MFFI), and 499–519 (PVIF…YYIV).

This sequence belongs to the OXA1/ALB3/YidC family. Type 1 subfamily. In terms of assembly, interacts with the Sec translocase complex via SecD. Specifically interacts with transmembrane segments of nascent integral membrane proteins during membrane integration.

It localises to the cell inner membrane. In terms of biological role, required for the insertion and/or proper folding and/or complex formation of integral membrane proteins into the membrane. Involved in integration of membrane proteins that insert both dependently and independently of the Sec translocase complex, as well as at least some lipoproteins. Aids folding of multispanning membrane proteins. The sequence is that of Membrane protein insertase YidC from Salmonella paratyphi C (strain RKS4594).